Consider the following 430-residue polypeptide: Enolase (430 aa).

Q162 lines the (2R)-2-phosphoglycerate pocket. The active-site Proton donor is E204. Positions 242, 289, and 316 each coordinate Mg(2+). Residues K341, R370, S371, and K392 each coordinate (2R)-2-phosphoglycerate. The active-site Proton acceptor is K341.

Belongs to the enolase family. The cofactor is Mg(2+).

The protein localises to the cytoplasm. It is found in the secreted. It localises to the cell surface. The enzyme catalyses (2R)-2-phosphoglycerate = phosphoenolpyruvate + H2O. The protein operates within carbohydrate degradation; glycolysis; pyruvate from D-glyceraldehyde 3-phosphate: step 4/5. Functionally, catalyzes the reversible conversion of 2-phosphoglycerate (2-PG) into phosphoenolpyruvate (PEP). It is essential for the degradation of carbohydrates via glycolysis. This Flavobacterium johnsoniae (strain ATCC 17061 / DSM 2064 / JCM 8514 / BCRC 14874 / CCUG 350202 / NBRC 14942 / NCIMB 11054 / UW101) (Cytophaga johnsonae) protein is Enolase.